Reading from the N-terminus, the 126-residue chain is Ribosome-binding factor A (126 aa).

The protein belongs to the RbfA family. Monomer. Binds 30S ribosomal subunits, but not 50S ribosomal subunits or 70S ribosomes.

The protein resides in the cytoplasm. Functionally, one of several proteins that assist in the late maturation steps of the functional core of the 30S ribosomal subunit. Associates with free 30S ribosomal subunits (but not with 30S subunits that are part of 70S ribosomes or polysomes). Required for efficient processing of 16S rRNA. May interact with the 5'-terminal helix region of 16S rRNA. This is Ribosome-binding factor A from Haemophilus ducreyi (strain 35000HP / ATCC 700724).